We begin with the raw amino-acid sequence, 113 residues long: UPF0342 protein SMU_782 (113 aa).

The protein belongs to the UPF0342 family.

The polypeptide is UPF0342 protein SMU_782 (Streptococcus mutans serotype c (strain ATCC 700610 / UA159)).